The following is a 314-amino-acid chain: Very long chain fatty acid elongase 4 (314 aa).

Asparagine 20 carries an N-linked (GlcNAc...) asparagine glycan. Helical transmembrane passes span 42–62 (LMQSPWPTLSISTLYLLFVWL), 78–98 (VLIIYNFGMVLLNLFIFRELF), 127–147 (ALWWYFVSKGVEYLDTVFFIL), 165–185 (MFTLWWIGIKWVAGGQAFFGA), 188–208 (NSFIHVIMYSYYGLTAFGPWI), 217–237 (YLTMLQLIQFHVTIGHTALSL), and 247–267 (MHWALIAYAISFIFLFLNFYI). Positions 275–314 (KPKAGKTAMNGISANGVSKSEKQLMIENGKKQKNGKAKGD) are disordered. Over residues 293 to 304 (KSEKQLMIENGK) the composition is skewed to basic and acidic residues. Residues 305–314 (KQKNGKAKGD) are compositionally biased toward basic residues. The short motif at 310-314 (KAKGD) is the Di-lysine motif element.

The protein belongs to the ELO family. ELOVL4 subfamily. In terms of assembly, oligomer. N-glycosylated. Expressed in the retina and at much lower level in the brain. Ubiquitous, highest expression in thymus, followed by testis, small intestine, ovary, and prostate. Little or no expression in heart, lung, liver, or leukocates.

The protein localises to the endoplasmic reticulum membrane. It catalyses the reaction a very-long-chain acyl-CoA + malonyl-CoA + H(+) = a very-long-chain 3-oxoacyl-CoA + CO2 + CoA. The enzyme catalyses tetracosanoyl-CoA + malonyl-CoA + H(+) = 3-oxohexacosanoyl-CoA + CO2 + CoA. The catalysed reaction is hexacosanoyl-CoA + malonyl-CoA + H(+) = 3-oxooctacosanyol-CoA + CO2 + CoA. It carries out the reaction octacosanoyl-CoA + malonyl-CoA + H(+) = 3-oxo-triacontanoyl-CoA + CO2 + CoA. It catalyses the reaction triacontanoyl-CoA + malonyl-CoA + H(+) = 3-oxo-dotriacontanoyl-CoA + CO2 + CoA. The enzyme catalyses (19Z,22Z,25Z,28Z,31Z)-tetratriacontapentaenoyl-CoA + malonyl-CoA + H(+) = 3-oxo-(21Z,24Z,27Z,30Z,33Z)-hexatriacontapentaenoyl-CoA + CO2 + CoA. The catalysed reaction is (4Z,7Z,10Z,13Z,16Z,19Z)-docosahexaenoyl-CoA + malonyl-CoA + H(+) = 3-oxo-(6Z,9Z,12Z,15Z,18Z,21Z)-tetracosahexaenoyl-CoA + CO2 + CoA. It carries out the reaction (7Z,10Z,13Z,16Z)-docosatetraenoyl-CoA + malonyl-CoA + H(+) = (9Z,12Z,15Z,18Z)-3-oxotetracosatetraenoyl-CoA + CO2 + CoA. It catalyses the reaction (11Z,14Z,17Z,20Z,23Z)-hexacosapentaenoyl-CoA + malonyl-CoA + H(+) = 3-oxo-(13Z,16Z,19Z,22Z,25Z)-octacosapentaenoyl-CoA + CO2 + CoA. The enzyme catalyses (13Z,16Z,19Z,22Z,25Z)-octacosapentaenoyl-CoA + malonyl-CoA + H(+) = 3-oxo-(15Z,18Z,21Z,24Z,27Z)-triacontapentaenoyl-CoA + CO2 + CoA. The catalysed reaction is (15Z,18Z,21Z,24Z,27Z)-triacontapentaenoyl-CoA + malonyl-CoA + H(+) = 3-oxo-(17Z,20Z,23Z,26Z,29Z)-dotriacontapentaenoyl-CoA + CO2 + CoA. It carries out the reaction (17Z,20Z,23Z,26Z,29Z)-dotriacontapentaenoyl-CoA + malonyl-CoA + H(+) = 3-oxo-(19Z,22Z,25Z,28Z,31Z)-tetratriacontapentaenoyl-CoA + CO2 + CoA. It catalyses the reaction (21Z,24Z,27Z,30Z,33Z)-hexatriacontapentaenoyl-CoA + malonyl-CoA + H(+) = 3-oxo-(23Z,26Z,29Z,32Z,35Z)-octatriacontapentaenoyl-CoA + CO2 + CoA. The enzyme catalyses (11Z,14Z,17Z,20Z)-hexacosatetraenoyl-CoA + malonyl-CoA + H(+) = (13Z,16Z,19Z,22Z)-3-oxooctacosatetraenoyl-CoA + CO2 + CoA. The catalysed reaction is (13Z,16Z,19Z,22Z)-octacosatetraenoyl-CoA + malonyl-CoA + H(+) = 3-oxo-(15Z,18Z,21Z,24Z)-triacontatetraenoyl-CoA + CO2 + CoA. It carries out the reaction (15Z,18Z,21Z,24Z)-triacontatetraenoyl-CoA + malonyl-CoA + H(+) = 3-oxo-(17Z,20Z,23Z,26Z)-dotriacontatetraenoyl-CoA + CO2 + CoA. It catalyses the reaction (17Z,20Z,23Z,26Z)-dotriacontatetraenoyl-CoA + malonyl-CoA + H(+) = 3-oxo-(19Z,22Z,25Z,28Z)-tetratriacontatetraenoyl-CoA + CO2 + CoA. The enzyme catalyses (19Z,22Z,25Z,28Z)-tetratriacontatetraenoyl-CoA + malonyl-CoA + H(+) = 3-oxo-(21Z,24Z,27Z,30Z)-hexatriacontatetraenoyl-CoA + CO2 + CoA. The catalysed reaction is (21Z,24Z,27Z,30Z)-hexatriacontatetraenoyl-CoA + malonyl-CoA + H(+) = 3-oxo-(23Z,26Z,29Z,32Z)-octatriacontatetraenoyl-CoA + CO2 + CoA. It carries out the reaction (6Z,9Z,12Z,15Z,18Z,21Z)-tetracosahexaenoyl-CoA + malonyl-CoA + H(+) = 3-oxo-(8Z,11Z,14Z,17Z,20Z,23Z)-hexacosahexaenoyl-CoA + CO2 + CoA. It catalyses the reaction (8Z,11Z,14Z,17Z,20Z,23Z)-hexacosahexaenoyl-CoA + malonyl-CoA + H(+) = 3-oxo-(10Z,13Z,16Z,19Z,22Z,25Z)-octacosahexaenoyl-CoA + CO2 + CoA. The enzyme catalyses (10Z,13Z,16Z,19Z,22Z,25Z)-octacosahexaenoyl-CoA + malonyl-CoA + H(+) = 3-oxo-(12Z,15Z,18Z,21Z,24Z,27Z)-triacontahexaenoyl-CoA + CO2 + CoA. The catalysed reaction is (12Z,15Z,18Z,21Z,24Z,27Z)-triacontahexaenoyl-CoA + malonyl-CoA + H(+) = 3-oxo-(14Z,17Z,20Z,23Z,26Z,29Z)-dotriacontahexaenoyl-CoA + CO2 + CoA. It carries out the reaction (14Z,17Z,20Z,23Z,26Z,29Z)-dotriacontahexaenoyl-CoA + malonyl-CoA + H(+) = 3-oxo-(16Z,19Z,22Z,25Z,28Z,31Z)-tetratriacontahexaenoyl-CoA + CO2 + CoA. It catalyses the reaction (16Z,19Z,22Z,25Z,28Z,31Z)-tetratriacontahexaenoyl-CoA + malonyl-CoA + H(+) = 3-oxo-(18Z,21Z,24Z,27Z,30Z,33Z)-hexatriacontahexaenoyl-CoA + CO2 + CoA. The enzyme catalyses (9Z,12Z,15Z,18Z,21Z)-tetracosapentaenoyl-CoA + malonyl-CoA + H(+) = 3-oxo-(11Z,14Z,17Z,20Z,23Z)-hexacosapentaenoyl-CoA + CO2 + CoA. It participates in lipid metabolism; fatty acid biosynthesis. Functionally, catalyzes the first and rate-limiting reaction of the four reactions that constitute the long-chain fatty acids elongation cycle. This endoplasmic reticulum-bound enzymatic process allows the addition of 2 carbons to the chain of long- and very long-chain fatty acids (VLCFAs) per cycle. Condensing enzyme that catalyzes the synthesis of very long chain saturated (VLC-SFA) and polyunsaturated (PUFA) fatty acids that are involved in multiple biological processes as precursors of membrane lipids and lipid mediators. May play a critical role in early brain and skin development. The chain is Very long chain fatty acid elongase 4 from Homo sapiens (Human).